Consider the following 231-residue polypeptide: Large ribosomal subunit protein uL1 (231 aa).

The protein belongs to the universal ribosomal protein uL1 family. In terms of assembly, part of the 50S ribosomal subunit.

Functionally, binds directly to 23S rRNA. The L1 stalk is quite mobile in the ribosome, and is involved in E site tRNA release. Protein L1 is also a translational repressor protein, it controls the translation of the L11 operon by binding to its mRNA. The protein is Large ribosomal subunit protein uL1 of Lactobacillus delbrueckii subsp. bulgaricus (strain ATCC 11842 / DSM 20081 / BCRC 10696 / JCM 1002 / NBRC 13953 / NCIMB 11778 / NCTC 12712 / WDCM 00102 / Lb 14).